The sequence spans 219 residues: AA11 family lytic polysaccharide monooxygenase A (219 aa).

Positions 1 to 18 are cleaved as a signal peptide; sequence MMLSKVVMGLLTASLAAA. His19 is a Cu(+) binding site. 3 cysteine pairs are disulfide-bonded: Cys58–Cys154, Cys94–Cys116, and Cys185–Cys218. N-linked (GlcNAc...) asparagine glycosylation occurs at Asn80. Position 89 (His89) interacts with Cu(+).

Belongs to the polysaccharide monooxygenase AA11 family. Requires Cu(2+) as cofactor.

Functionally, lytic polysaccharide monooxygenase (LPMO) that depolymerizes chitin via the oxidation of scissile beta-(1-4)-glycosidic bonds, yielding C1 or C4 oxidation products. Catalysis by LPMOs requires the reduction of the active-site copper from Cu(II) to Cu(I) by a reducing agent and H(2)O(2) or O(2) as a cosubstrate. Has considerable affinity for alpha-chitin and, more so, beta-chitin. Active toward both alpha-chitin and beta-chitin allomorphs and enhances chitin degradation by an endoacting chitinase, in particular for alpha-chitin, and so plays a role in fungal chitin turnover. The catalytic activity increases when supplying reactions with hydrogen peroxide, confirming that it has peroxygenase activity. Does not show activity on phosphoric acid-swollen cellulose (PASC), Avicel, tamarind xyloglucan, birchwood xylan, beechwood xylan, acetyl glucuronoxylan from aspen, ivory nut mannan, acetylated konjac glucomannan, potato starch, heparin, hyaluronic acid, and chitosan. This chain is AA11 family lytic polysaccharide monooxygenase A, found in Aspergillus fumigatus (strain CBS 144.89 / FGSC A1163 / CEA10) (Neosartorya fumigata).